The following is a 131-amino-acid chain: Small ribosomal subunit protein bS6 (131 aa).

The segment at 96-131 is disordered; it reads VTEASPMAKAKDERDSRRGPAGDRSYDEANAEEIAE. Over residues 104-122 the composition is skewed to basic and acidic residues; sequence KAKDERDSRRGPAGDRSYD.

It belongs to the bacterial ribosomal protein bS6 family.

Binds together with bS18 to 16S ribosomal RNA. In Shewanella sp. (strain MR-4), this protein is Small ribosomal subunit protein bS6.